A 461-amino-acid polypeptide reads, in one-letter code: Decaprenylphosphoryl-beta-D-ribose oxidase (461 aa).

The FAD-binding PCMH-type domain occupies 19–194 (TAPSVANVLR…MRATIEMTPT (176 aa)). Residues 53-63 (ARGLGRSYGDN), Gly117, 122-125 (TVGG), 129-132 (CDIH), Ile184, and Tyr415 each bind FAD.

The protein belongs to the DprE1 family. In terms of assembly, monomer. Although forming apparent dimer in crystals, DprE1 does not dimerize appreciably in solution. Interacts with DprE2 to form an epimerase complex.

It localises to the periplasm. The enzyme catalyses trans,octa-cis-decaprenylphospho-beta-D-ribofuranose + FAD + H(+) = trans,octa-cis-decaprenylphospho-beta-D-erythro-pentofuranosid-2-ulose + FADH2. It functions in the pathway cell wall biogenesis; cell wall polysaccharide biosynthesis. Is inhibited by 8-nitro-benzothiazinones (BTZs) such as BTZ043 and PBTZ169; BTZs are a new class of antimycobacterial agents that kill M.tuberculosis in vitro, ex vivo, and in mouse models of tuberculosis. Is also inhibited by dinitrobenzamide derivatives (DNBs), which thus block formation of both cell-wall lipoarabinomannan and arabinogalactan via inhibition of decaprenyl-phospho-arabinose (DPA) synthesis; DNBs show high activity against intracellular growth of M.tuberculosis inside macrophages, including extensively drug resistant (XDR) strains. BTZs and DNBs are suicide inhibitors that act via covalent modification of DprE1; the essential nitro group of these compounds is reduced by DprE1 to a nitroso group, which then specifically reacts with Cys-387 of DprE1 to form an irreversible semimercaptal adduct. Many other compounds with diverse scaffolds were found to act as either covalent (e.g. nitroquinoxalines, nitroimidazoles) or non-covalent (e.g. the benzothiazole derivative TCA1, the 2-carboxyquinoxaline Ty38C, 8-pyrrole-benzothiazinones, 1,4-azaindoles, pyrazolopyridones, 4-aminoquinolone piperidine amides) DprE1 inhibitors. Its function is as follows. Component of the DprE1-DprE2 complex that catalyzes the 2-step epimerization of decaprenyl-phospho-ribose (DPR) to decaprenyl-phospho-arabinose (DPA), a key precursor that serves as the arabinose donor required for the synthesis of cell-wall arabinans. DprE1 catalyzes the first step of epimerization, namely FAD-dependent oxidation of the C2' hydroxyl of DPR to yield the keto intermediate decaprenyl-phospho-2'-keto-D-arabinose (DPX). The intermediate DPX is then transferred to DprE2 subunit of the epimerase complex, most probably through a 'substrate channel' at the interface of DprE1-DprE2 complex. Can also use farnesyl-phosphoryl-beta-D-ribofuranose (FPR) as substrate in vitro. In terms of biological role, dprE1 is a highly vulnerable and fully validated tuberculosis drug target. The chain is Decaprenylphosphoryl-beta-D-ribose oxidase from Mycobacterium tuberculosis (strain CDC 1551 / Oshkosh).